The chain runs to 163 residues: GSEIKEYAAHLIPEGGFKAIPQLFGNGWVVVGDAAQLNNAVHREGSNLAMTSGLMAGEAIFQIKSRGGLMTKRNLSLYKGMLGKSFVMKDLMKHKDLPSLLHTDSHNFFMTYPTLISQAAQNFVRVDGAPKINTEKATAASFINARSRWGLISDAVRSAVSWR.

It belongs to the ETF-QO/FixC family. The cofactor is FAD.

In terms of biological role, could be required for the formation of a functional nitrogenase Fe protein. Probably accepts electrons from FixA/FixB and reduces a quinone. In Rhizobium leguminosarum, this protein is Protein FixC (fixC).